A 245-amino-acid chain; its full sequence is CTD nuclear envelope phosphatase 1B (245 aa).

The chain crosses the membrane as a helical span at residues 7-29 (CLLGVRTFHGVTSRIWSFFLYIL). Residues 58-225 (NNVKRKILVL…LNLLPMLDAL (168 aa)) form the FCP1 homology domain.

It belongs to the dullard family.

It localises to the endoplasmic reticulum membrane. Its subcellular location is the nucleus membrane. It carries out the reaction O-phospho-L-seryl-[protein] + H2O = L-seryl-[protein] + phosphate. The catalysed reaction is O-phospho-L-threonyl-[protein] + H2O = L-threonyl-[protein] + phosphate. Its function is as follows. Serine/threonine protein phosphatase that may dephosphorylate and activate lipins. Lipins are phosphatidate phosphatases that catalyze the conversion of phosphatidic acid to diacylglycerol and control the metabolism of fatty acids at different levels. May indirectly modulate the lipid composition of nuclear and/or endoplasmic reticulum membranes and be required for proper nuclear membrane morphology and/or dynamics. May also indirectly regulate the production of lipid droplets and triacylglycerol. May antagonize BMP signaling. The protein is CTD nuclear envelope phosphatase 1B (ctdnep1b) of Danio rerio (Zebrafish).